Here is a 176-residue protein sequence, read N- to C-terminus: NAD(P)H-quinone oxidoreductase subunit I, chloroplastic (176 aa).

2 4Fe-4S ferredoxin-type domains span residues 55-84 and 95-124; these read GRIHFEFDKCIACEVCVRVCPINLPVVNWE and QTYSIDFGVCIFCGNCVEYCPTNCLSMTEE. [4Fe-4S] cluster is bound by residues cysteine 64, cysteine 67, cysteine 70, cysteine 74, cysteine 104, cysteine 107, cysteine 110, and cysteine 114.

It belongs to the complex I 23 kDa subunit family. As to quaternary structure, NDH is composed of at least 16 different subunits, 5 of which are encoded in the nucleus. [4Fe-4S] cluster is required as a cofactor.

It localises to the plastid. The protein localises to the chloroplast thylakoid membrane. The catalysed reaction is a plastoquinone + NADH + (n+1) H(+)(in) = a plastoquinol + NAD(+) + n H(+)(out). It carries out the reaction a plastoquinone + NADPH + (n+1) H(+)(in) = a plastoquinol + NADP(+) + n H(+)(out). NDH shuttles electrons from NAD(P)H:plastoquinone, via FMN and iron-sulfur (Fe-S) centers, to quinones in the photosynthetic chain and possibly in a chloroplast respiratory chain. The immediate electron acceptor for the enzyme in this species is believed to be plastoquinone. Couples the redox reaction to proton translocation, and thus conserves the redox energy in a proton gradient. In Mesostigma viride (Green alga), this protein is NAD(P)H-quinone oxidoreductase subunit I, chloroplastic.